The chain runs to 132 residues: Large ribosomal subunit protein bL17 (132 aa).

Belongs to the bacterial ribosomal protein bL17 family. Part of the 50S ribosomal subunit. Contacts protein L32.

This Ruthia magnifica subsp. Calyptogena magnifica protein is Large ribosomal subunit protein bL17.